A 71-amino-acid chain; its full sequence is Biotinylated protein TB7.3 homolog (71 aa).

The 70-residue stretch at 2-71 (AEDVRAEIVA…QAGHLIAVID (70 aa)) folds into the Biotinyl-binding domain. At K37 the chain carries N6-biotinyllysine.

The protein is Biotinylated protein TB7.3 homolog of Mycolicibacterium smegmatis (strain ATCC 700084 / mc(2)155) (Mycobacterium smegmatis).